We begin with the raw amino-acid sequence, 1096 residues long: Phospholipase D zeta 1 (1096 aa).

Ala2 carries the N-acetylalanine modification. In terms of domain architecture, PX spans 50-204 (PKAVIVSVSR…REVCRFLEVS (155 aa)). Residues 131–152 (VQDEDADEVPLHQDESAKNRDV) are disordered. Over residues 139–151 (VPLHQDESAKNRD) the composition is skewed to basic and acidic residues. The 109-residue stretch at 234 to 342 (DDSNRCCGCC…WVASINDAAL (109 aa)) folds into the PH domain. The 28-residue stretch at 477–504 (YLWSHHEKLVIVDNQVCFIGGLDLCFGR) folds into the PLD phosphodiesterase 1 domain. Catalysis depends on residues His482, Lys484, and Asp489. Residues 607 to 632 (GRQEESDIESKKEEDSIRGIRRDDSF) show a composition bias toward basic and acidic residues. The disordered stretch occupies residues 607–691 (GRQEESDIES…DGDTPMRGFV (85 aa)). One can recognise a PLD phosphodiesterase 2 domain in the interval 892 to 919 (SQVYVHSKIMIVDDRAALIGSANINDRS). Catalysis depends on residues His897, Lys899, and Asp904.

Belongs to the phospholipase D family. PXPH-PLD subfamily. Does not require Ca(2+) or any other cation for activity. serves as cofactor. Expressed in inflorescences, flowers, siliques, stems, leaves, and roots. Highest expression in roots.

The protein resides in the cytoplasmic vesicle. The enzyme catalyses a 1,2-diacyl-sn-glycero-3-phosphocholine + H2O = a 1,2-diacyl-sn-glycero-3-phosphate + choline + H(+). Its activity is regulated as follows. Calcium-independent and PIP2-dependent. In terms of biological role, hydrolyzes glycerol-phospholipids at the terminal phosphodiesteric bond to generate phosphatidic acids (PA). Phosphatidylcholine-selective. Regulates root-hair morphogenesis. Contributes to the supply of inorganic phosphorus for cell metabolism and diacylglycerol moieties for galactolipid synthesis in phosphorus-starved roots. Involved in root elongation during phosphate limitation. The chain is Phospholipase D zeta 1 from Arabidopsis thaliana (Mouse-ear cress).